We begin with the raw amino-acid sequence, 312 residues long: Light-independent protochlorophyllide reductase iron-sulfur ATP-binding protein (312 aa).

ATP-binding positions include Gly-55–Thr-60 and Lys-84. Residue Ser-59 participates in Mg(2+) binding. 2 residues coordinate [4Fe-4S] cluster: Cys-140 and Cys-174. Residues Asn-225–Arg-226 and Pro-249–Leu-251 each bind ATP.

Belongs to the NifH/BchL/ChlL family. Homodimer. Protochlorophyllide reductase is composed of three subunits; BchL, BchN and BchB. [4Fe-4S] cluster is required as a cofactor.

It carries out the reaction chlorophyllide a + oxidized 2[4Fe-4S]-[ferredoxin] + 2 ADP + 2 phosphate = protochlorophyllide a + reduced 2[4Fe-4S]-[ferredoxin] + 2 ATP + 2 H2O. It functions in the pathway porphyrin-containing compound metabolism; bacteriochlorophyll biosynthesis (light-independent). Functionally, component of the dark-operative protochlorophyllide reductase (DPOR) that uses Mg-ATP and reduced ferredoxin to reduce ring D of protochlorophyllide (Pchlide) to form chlorophyllide a (Chlide). This reaction is light-independent. The L component serves as a unique electron donor to the NB-component of the complex, and binds Mg-ATP. This Rhodopseudomonas palustris (strain ATCC BAA-98 / CGA009) protein is Light-independent protochlorophyllide reductase iron-sulfur ATP-binding protein.